Here is a 413-residue protein sequence, read N- to C-terminus: Hemolin (413 aa).

Residues methionine 1–leucine 19 form the signal peptide. Ig-like C2-type domains are found at residues proline 25 to serine 112, proline 122 to valine 211, proline 233 to threonine 322, and proline 327 to asparagine 413. 4 cysteine pairs are disulfide-bonded: cysteine 46/cysteine 97, cysteine 140/cysteine 199, cysteine 252/cysteine 305, and cysteine 349/cysteine 395. The N-linked (GlcNAc...) asparagine glycan is linked to asparagine 283.

The protein belongs to the hemolin family. In terms of tissue distribution, hemolymph.

It localises to the secreted. It is found in the extracellular space. In terms of biological role, insect-immune protein. Forms a protein complex at the bacterial surface. Can inhibit hemocyte aggregation. The protein is Hemolin of Hyalophora cecropia (Cecropia moth).